The following is a 641-amino-acid chain: WW domain-binding protein 11 (641 aa).

Positions 1–11 (MGRRSTSSTKS) are enriched in polar residues. A disordered region spans residues 1 to 37 (MGRRSTSSTKSGKFMNPTDQARKEARKRELKKNKKQR). Positions 1-45 (MGRRSTSSTKSGKFMNPTDQARKEARKRELKKNKKQRMMVRAAVL) are required for nuclear import. K13 carries the post-translational modification N6-acetyllysine. The span at 28–37 (RELKKNKKQR) shows a compositional bias: basic residues. Positions 75–133 (EKVLKDKRKKLRETFERILRLYEKENPDIYKELRKLEVEYEQKRAQLSQYFDAVKNAQH) form a coiled coil. A Phosphoserine modification is found at S181. The tract at residues 188–213 (HGVPRLPPGRKPPGPPPGPPPPQVLQ) is disordered. At R192 the chain carries Omega-N-methylarginine. A compositionally biased stretch (pro residues) spans 192 to 210 (RLPPGRKPPGPPPGPPPPQ). Residues 217–221 (RKVGF) are interaction with PP1. Y236 is modified (phosphotyrosine). Residues 236-550 (YSPELAQRGH…IQRPKADDAS (315 aa)) are disordered. The residue at position 237 (S237) is a Phosphoserine. Acidic residues predominate over residues 253-263 (SEDDGYPEDMD). A compositionally biased stretch (basic and acidic residues) spans 276–304 (TDRSDAESDGDEFGHREDSERDNTEEKKS). A phosphoserine mark is found at S279 and S283. The interaction with PP1 stretch occupies residues 306–310 (LSVRF). The segment covering 351–365 (EFSEEEDADDSDDSE) has biased composition (acidic residues). 3 positions are modified to phosphoserine: S353, S361, and S364. Positions 366–380 (AEKQSQKQHKDDGHS) are enriched in basic and acidic residues. The span at 381 to 404 (DSTAAASSQQQAPPQSAPASQIQA) shows a compositional bias: low complexity. 3 stretches are compositionally biased toward pro residues: residues 405–447 (PPMP…PPGM), 456–504 (RLLP…PPRP), and 510–530 (PLVP…PLPN). Residues 455 to 466 (PRLLPPGPPPGR) carry the PGR motif. K557 is covalently cross-linked (Glycyl lysine isopeptide (Lys-Gly) (interchain with G-Cter in SUMO2)). N6-acetyllysine is present on K565. A Glycyl lysine isopeptide (Lys-Gly) (interchain with G-Cter in SUMO2) cross-link involves residue K572. The tract at residues 588–620 (ENKGATAVPQRRSEDDSAVPVAKAAPRSGPSVA) is disordered. Residue S600 is modified to Phosphoserine. Residues 633–641 (FMKEMEGLL) are required for nuclear export.

Interacts via the PGR motif with PQBP1 in the nucleus. Interacts with the WW domains of WBP4. Interacts with PPP1CA, PPP1CB and PPP1CC. As to expression, ubiquitously expressed, with highest levels in testis.

It localises to the nucleus. Its subcellular location is the cytoplasm. Its function is as follows. Activates pre-mRNA splicing. May inhibit PP1 phosphatase activity. In Mus musculus (Mouse), this protein is WW domain-binding protein 11 (Wbp11).